The primary structure comprises 393 residues: 5-amino-6-(D-ribitylamino)uracil--L-tyrosine 4-hydroxyphenyl transferase (393 aa).

The 248-residue stretch at 71–318 (VTYVINRNIN…TAVSRIFLGN (248 aa)) folds into the Radical SAM core domain. Positions 85, 89, and 92 each coordinate [4Fe-4S] cluster.

Belongs to the radical SAM superfamily. CofH family. As to quaternary structure, consists of two subunits, CofG and CofH. It depends on [4Fe-4S] cluster as a cofactor.

The enzyme catalyses 5-amino-6-(D-ribitylamino)uracil + L-tyrosine + S-adenosyl-L-methionine = 5-amino-5-(4-hydroxybenzyl)-6-(D-ribitylimino)-5,6-dihydrouracil + 2-iminoacetate + 5'-deoxyadenosine + L-methionine + H(+). It functions in the pathway cofactor biosynthesis; coenzyme F0 biosynthesis. In terms of biological role, catalyzes the radical-mediated synthesis of 5-amino-5-(4-hydroxybenzyl)-6-(D-ribitylimino)-5,6-dihydrouracil from 5-amino-6-(D-ribitylamino)uracil and L-tyrosine. This chain is 5-amino-6-(D-ribitylamino)uracil--L-tyrosine 4-hydroxyphenyl transferase, found in Trichodesmium erythraeum (strain IMS101).